Reading from the N-terminus, the 394-residue chain is ATP phosphoribosyltransferase regulatory subunit (394 aa).

This sequence belongs to the class-II aminoacyl-tRNA synthetase family. HisZ subfamily. As to quaternary structure, heteromultimer composed of HisG and HisZ subunits.

It is found in the cytoplasm. It participates in amino-acid biosynthesis; L-histidine biosynthesis; L-histidine from 5-phospho-alpha-D-ribose 1-diphosphate: step 1/9. Its function is as follows. Required for the first step of histidine biosynthesis. May allow the feedback regulation of ATP phosphoribosyltransferase activity by histidine. In Saccharophagus degradans (strain 2-40 / ATCC 43961 / DSM 17024), this protein is ATP phosphoribosyltransferase regulatory subunit.